The following is a 439-amino-acid chain: Forkhead box protein J1-A (439 aa).

A DNA-binding region (fork-head) is located at residues 124-218 (KPPYSYATLI…INGAMKKRRL (95 aa)). Residues 273 to 293 (EHGWNSISDGKSHKRKQPLPK) form a disordered region. Over residues 284-293 (SHKRKQPLPK) the composition is skewed to basic residues.

Belongs to the FOXJ1 family. Expressed in two independent areas of stage 10-11 embryos; in the dorsal blastopore lip (Spemann organizer) and shortly after in the ectodermal cells of the animal cap. As development proceeds, cells of the animal cap contribute to the epidermis and show a spotty pattern, which suggests expression in ciliated epidermal cells. Distribution of these cells is uniform in the trunk area of the embryo but more random in the head, being practically absent in the cement gland and olfactory placode. The spotted pattern becomes more dispersed as embryos grow in size. Due to cell movements during gastrulation, expression in the dorsal lip becomes located in the dorsal midline with expression restricted to the neuroectoderm. Expressed transiently in cells of the newly formed neural floor plate in the tail of older tadpoles.

The protein localises to the nucleus. In terms of biological role, key transcription factor required for motile ciliogenesis. Activates genes essential for motile cilia formation and function. Required for ciliogenesis in multiciliated cells. The chain is Forkhead box protein J1-A (foxj1-a) from Xenopus laevis (African clawed frog).